Consider the following 283-residue polypeptide: Tryptophan 2,3-dioxygenase (283 aa).

Residues 52–56 (FIIQH), tyrosine 114, and arginine 118 contribute to the substrate site. Residue histidine 241 participates in heme binding. Residue threonine 255 coordinates substrate.

The protein belongs to the tryptophan 2,3-dioxygenase family. As to quaternary structure, homotetramer. Heme serves as cofactor.

The enzyme catalyses L-tryptophan + O2 = N-formyl-L-kynurenine. Its pathway is amino-acid degradation; L-tryptophan degradation via kynurenine pathway; L-kynurenine from L-tryptophan: step 1/2. Functionally, heme-dependent dioxygenase that catalyzes the oxidative cleavage of the L-tryptophan (L-Trp) pyrrole ring and converts L-tryptophan to N-formyl-L-kynurenine. Catalyzes the oxidative cleavage of the indole moiety. The polypeptide is Tryptophan 2,3-dioxygenase (Pseudomonas fluorescens (strain ATCC BAA-477 / NRRL B-23932 / Pf-5)).